A 109-amino-acid polypeptide reads, in one-letter code: RNA-binding protein Hfq (109 aa).

The Sm domain occupies 9–68 (DPFLNALRKEKVSVSVYLVNGIKLQGQVEAFDQFCIVLRNTVNQMVYKHAISTIVPAKSV).

This sequence belongs to the Hfq family. As to quaternary structure, homohexamer.

RNA chaperone that binds small regulatory RNA (sRNAs) and mRNAs to facilitate mRNA translational regulation in response to envelope stress, environmental stress and changes in metabolite concentrations. Also binds with high specificity to tRNAs. This Francisella philomiragia subsp. philomiragia (strain ATCC 25017 / CCUG 19701 / FSC 153 / O#319-036) protein is RNA-binding protein Hfq.